The primary structure comprises 288 residues: Dichloromethane dehalogenase (288 aa).

The GST N-terminal domain maps to K12–G94. The region spanning G100–V252 is the GST C-terminal domain.

Belongs to the GST superfamily. In terms of assembly, homohexamer.

The protein localises to the cytoplasm. The enzyme catalyses dichloromethane + H2O = formaldehyde + 2 chloride + 2 H(+). The protein operates within xenobiotic degradation; dichloromethane degradation. This is Dichloromethane dehalogenase (dcmA) from Methylorubrum extorquens (strain DSM 6343 / CIP 106787 / DM4) (Methylobacterium extorquens).